The chain runs to 274 residues: Prothoracicostatic peptide (274 aa).

A signal peptide spans 1–19 (MRWCLFALWVFGVATVVTA). The propeptide occupies 20–67 (AEEPHHDAAPQTDNEVDLTEDDKRAWSSLHSGWAKRAWQDMSSAWGKR). A Tryptophan amide modification is found at tryptophan 76. The propeptide occupies 77–91 (GKRGWQDLNSAWGKR). Residue tryptophan 100 is modified to Tryptophan amide. A propeptide spanning residues 101–136 (GKRGWQDLNSAWGKRDDDEAMEKKSWQDLNSVWGKR) is cleaved from the precursor. A Tryptophan amide modification is found at tryptophan 145. Positions 146–148 (GKR) are excised as a propeptide. Tryptophan 157 is modified (tryptophan amide). Residues 158 to 172 (GKRGWNDISSVWGKR) constitute a propeptide that is removed on maturation. At tryptophan 181 the chain carries Tryptophan amide. Residues 182 to 274 (GKRAWQDMSS…NEHSATTNEA (93 aa)) constitute a propeptide that is removed on maturation.

It is found in the secreted. In terms of biological role, inhibits ecdysteroid biosynthesis in the prothoracic gland of fifth instar larvae, with maximum inhibition during the spinning stage. When administered to day 8 fifth instar larvae it produces a significant delay in the commencement spinning behavior. In Bombyx mori (Silk moth), this protein is Prothoracicostatic peptide.